A 383-amino-acid chain; its full sequence is MILSPADQERIETFWNYCLKHQYFNIGYPESADFDYSALFRFFKFSINNCGDWKDYSNYALNSFDFEKDVMAYFAEIFQIPFEESWGYVTNGGTEGNMFGCYLARELFPDSTLYYSKDTHYSVGKIAKLLQMKSCVIESLDNGEIDYDDLIHKIKTNKESHPIIFANIGTTMTGAIDDIEMIQERLAQIGIMRRDYYIHADAALSGMILPFVDHPQAFSFAHGIDSICVSGHKMIGSPIPCGIVVAKRQNVERISVDVDYISTRDQTISGSRNGHTVLLMWAAIRSQTNLQRRHRIQHCLKMAQYAVDRFQAVGIPAWRNPNSITVVFPCPSEHIWKKHYLATSGNMAHLITTAHHRDTRQIDSLIDDVIFDLQGASKRTVGF.

His-120 is a substrate binding site. An N6-(pyridoxal phosphate)lysine modification is found at Lys-233.

It belongs to the group II decarboxylase family. Homotetramer. The cofactor is pyridoxal 5'-phosphate.

It catalyses the reaction L-histidine + H(+) = histamine + CO2. The polypeptide is Histidine decarboxylase (Acinetobacter baumannii (strain ATCC 17978 / DSM 105126 / CIP 53.77 / LMG 1025 / NCDC KC755 / 5377)).